A 193-amino-acid chain; its full sequence is Peptidyl-tRNA hydrolase (193 aa).

Tyr-16 contacts tRNA. The active-site Proton acceptor is His-21. Residues Phe-67, Asn-69, and Asn-115 each contribute to the tRNA site.

It belongs to the PTH family. As to quaternary structure, monomer.

Its subcellular location is the cytoplasm. The catalysed reaction is an N-acyl-L-alpha-aminoacyl-tRNA + H2O = an N-acyl-L-amino acid + a tRNA + H(+). Functionally, hydrolyzes ribosome-free peptidyl-tRNAs (with 1 or more amino acids incorporated), which drop off the ribosome during protein synthesis, or as a result of ribosome stalling. In terms of biological role, catalyzes the release of premature peptidyl moieties from peptidyl-tRNA molecules trapped in stalled 50S ribosomal subunits, and thus maintains levels of free tRNAs and 50S ribosomes. In Psychrobacter arcticus (strain DSM 17307 / VKM B-2377 / 273-4), this protein is Peptidyl-tRNA hydrolase.